A 420-amino-acid polypeptide reads, in one-letter code: 3-isopropylmalate dehydratase large subunit (420 aa).

[4Fe-4S] cluster is bound by residues Cys300, Cys360, and Cys363.

It belongs to the aconitase/IPM isomerase family. LeuC type 2 subfamily. As to quaternary structure, heterodimer of LeuC and LeuD. [4Fe-4S] cluster is required as a cofactor.

The catalysed reaction is (2R,3S)-3-isopropylmalate = (2S)-2-isopropylmalate. Its pathway is amino-acid biosynthesis; L-leucine biosynthesis; L-leucine from 3-methyl-2-oxobutanoate: step 2/4. Catalyzes the isomerization between 2-isopropylmalate and 3-isopropylmalate, via the formation of 2-isopropylmaleate. The sequence is that of 3-isopropylmalate dehydratase large subunit from Clostridium kluyveri (strain ATCC 8527 / DSM 555 / NBRC 12016 / NCIMB 10680 / K1).